Here is an 877-residue protein sequence, read N- to C-terminus: Translation initiation factor IF-2 (877 aa).

The disordered stretch occupies residues 48 to 289; sequence SSFQNSAPAE…QITKRKERPL (242 aa). A compositionally biased stretch (basic and acidic residues) spans 78-89; it reads RKNEKKPEENNT. Positions 92–101 are enriched in basic residues; that stretch reads KSNRRRNNKR. Residues 102-116 show a composition bias toward basic and acidic residues; it reads RSSDRARDNKERDAK. Over residues 123–132 the composition is skewed to low complexity; sequence KAAALLQQFK. Basic and acidic residues-rich tracts occupy residues 135–155 and 162–189; these read QRAE…EYHE and KEQS…EKKV. Residues 277–286 are compositionally biased toward basic residues; it reads PRKQITKRKE. One can recognise a tr-type G domain in the interval 378–547; that stretch reads KRPPVVTIMG…LLQADVMELK (170 aa). The G1 stretch occupies residues 387-394; it reads GHVDHGKT. 387 to 394 is a GTP binding site; it reads GHVDHGKT. Positions 412-416 are G2; the sequence is GITQR. A G3 region spans residues 433–436; that stretch reads DTPG. Residues 433 to 437 and 487 to 490 contribute to the GTP site; these read DTPGH and NKMD. The tract at residues 487 to 490 is G4; it reads NKMD. The interval 523–525 is G5; sequence SAK.

It belongs to the TRAFAC class translation factor GTPase superfamily. Classic translation factor GTPase family. IF-2 subfamily.

It localises to the cytoplasm. One of the essential components for the initiation of protein synthesis. Protects formylmethionyl-tRNA from spontaneous hydrolysis and promotes its binding to the 30S ribosomal subunits. Also involved in the hydrolysis of GTP during the formation of the 70S ribosomal complex. The polypeptide is Translation initiation factor IF-2 (Lactobacillus acidophilus (strain ATCC 700396 / NCK56 / N2 / NCFM)).